The primary structure comprises 60 residues: uncharacterized protein (60 aa).

A helical membrane pass occupies residues 14–34; the sequence is MLFLGTIGLAVVVGGLMAYGY. A disordered region spans residues 38–60; sequence GKTPSSGTSFHTASPSFSSRYRY. Over residues 40–60 the composition is skewed to polar residues; sequence TPSSGTSFHTASPSFSSRYRY.

The protein resides in the host membrane. This is an uncharacterized protein from Dryophytes versicolor (chameleon treefrog).